A 59-amino-acid polypeptide reads, in one-letter code: Photosystem II reaction center protein K (59 aa).

Residues 1–22 (MLNIFSLICLNSDLYSSRFFLA) constitute a propeptide that is removed on maturation. The helical transmembrane segment at 38-58 (MPVIPLFFLLLAFVWQAAVSF) threads the bilayer.

The protein belongs to the PsbK family. PSII is composed of 1 copy each of membrane proteins PsbA, PsbB, PsbC, PsbD, PsbE, PsbF, PsbH, PsbI, PsbJ, PsbK, PsbL, PsbM, PsbT, PsbX, PsbY, PsbZ, Psb30/Ycf12, at least 3 peripheral proteins of the oxygen-evolving complex and a large number of cofactors. It forms dimeric complexes.

The protein localises to the plastid. It is found in the chloroplast thylakoid membrane. Functionally, one of the components of the core complex of photosystem II (PSII). PSII is a light-driven water:plastoquinone oxidoreductase that uses light energy to abstract electrons from H(2)O, generating O(2) and a proton gradient subsequently used for ATP formation. It consists of a core antenna complex that captures photons, and an electron transfer chain that converts photonic excitation into a charge separation. The sequence is that of Photosystem II reaction center protein K from Oenothera elata subsp. hookeri (Hooker's evening primrose).